The primary structure comprises 464 residues: ATP synthase subunit beta (464 aa).

Residue 152 to 159 (GGAGVGKT) participates in ATP binding.

Belongs to the ATPase alpha/beta chains family. In terms of assembly, F-type ATPases have 2 components, CF(1) - the catalytic core - and CF(0) - the membrane proton channel. CF(1) has five subunits: alpha(3), beta(3), gamma(1), delta(1), epsilon(1). CF(0) has three main subunits: a(1), b(2) and c(9-12). The alpha and beta chains form an alternating ring which encloses part of the gamma chain. CF(1) is attached to CF(0) by a central stalk formed by the gamma and epsilon chains, while a peripheral stalk is formed by the delta and b chains.

Its subcellular location is the cell membrane. It catalyses the reaction ATP + H2O + 4 H(+)(in) = ADP + phosphate + 5 H(+)(out). Its function is as follows. Produces ATP from ADP in the presence of a proton gradient across the membrane. The catalytic sites are hosted primarily by the beta subunits. In Clostridioides difficile (strain 630) (Peptoclostridium difficile), this protein is ATP synthase subunit beta.